The sequence spans 168 residues: S-ribosylhomocysteine lyase (168 aa).

Residues histidine 54, histidine 58, and cysteine 128 each contribute to the Fe cation site.

Belongs to the LuxS family. As to quaternary structure, homodimer. Requires Fe cation as cofactor.

The catalysed reaction is S-(5-deoxy-D-ribos-5-yl)-L-homocysteine = (S)-4,5-dihydroxypentane-2,3-dione + L-homocysteine. Involved in the synthesis of autoinducer 2 (AI-2) which is secreted by bacteria and is used to communicate both the cell density and the metabolic potential of the environment. The regulation of gene expression in response to changes in cell density is called quorum sensing. Catalyzes the transformation of S-ribosylhomocysteine (RHC) to homocysteine (HC) and 4,5-dihydroxy-2,3-pentadione (DPD). This Mannheimia succiniciproducens (strain KCTC 0769BP / MBEL55E) protein is S-ribosylhomocysteine lyase.